The chain runs to 674 residues: DNA ligase (674 aa).

NAD(+) contacts are provided by residues 34-38 (DAEYD), 84-85 (SL), and E116. K118 (N6-AMP-lysine intermediate) is an active-site residue. Positions 139, 174, 291, and 315 each coordinate NAD(+). The Zn(2+) site is built by C409, C412, C425, and C430. One can recognise a BRCT domain in the interval 586-674 (REGEALKGLT…TGKDPRALTA (89 aa)).

The protein belongs to the NAD-dependent DNA ligase family. LigA subfamily. Mg(2+) is required as a cofactor. Requires Mn(2+) as cofactor.

The catalysed reaction is NAD(+) + (deoxyribonucleotide)n-3'-hydroxyl + 5'-phospho-(deoxyribonucleotide)m = (deoxyribonucleotide)n+m + AMP + beta-nicotinamide D-nucleotide.. In terms of biological role, DNA ligase that catalyzes the formation of phosphodiester linkages between 5'-phosphoryl and 3'-hydroxyl groups in double-stranded DNA using NAD as a coenzyme and as the energy source for the reaction. It is essential for DNA replication and repair of damaged DNA. The polypeptide is DNA ligase (Thermus sp. (strain AK16D)).